Reading from the N-terminus, the 86-residue chain is RNA-binding protein Hfq (86 aa).

In terms of domain architecture, Sm spans 12 to 73 (DIFLNQVRKE…ISTISPQKPV (62 aa)).

The protein belongs to the Hfq family. In terms of assembly, homohexamer.

RNA chaperone that binds small regulatory RNA (sRNAs) and mRNAs to facilitate mRNA translational regulation in response to envelope stress, environmental stress and changes in metabolite concentrations. Also binds with high specificity to tRNAs. This is RNA-binding protein Hfq from Caldanaerobacter subterraneus subsp. tengcongensis (strain DSM 15242 / JCM 11007 / NBRC 100824 / MB4) (Thermoanaerobacter tengcongensis).